A 353-amino-acid chain; its full sequence is Hydrazine synthase subunit gamma (353 aa).

Residues 1 to 39 form the signal peptide; that stretch reads MAREMRLGGKERMKTGVVKIGLVAALGVVGLISAGGVYA. Residues cysteine 102, cysteine 105, and histidine 106 each coordinate heme c. The Ca(2+) site is built by aspartate 118, leucine 119, glutamate 122, glycine 123, serine 126, asparagine 129, leucine 139, and proline 141. Cysteine 165, cysteine 225, cysteine 228, and histidine 229 together coordinate heme c. A Cytochrome c domain is found at 209-353; it reads EAQKRGQKIF…QDLVEYLKAL (145 aa). Positions 296, 306, 307, and 308 each coordinate Ca(2+). A heme c-binding site is contributed by histidine 332.

In terms of assembly, part of the hydrazine synthase complex that forms an elongated dimer of heterotrimers composed of one alpha, one beta and one gamma subunit. The cofactor is heme c.

The protein resides in the anammoxosome. The enzyme catalyses hydrazine + 3 Fe(III)-[cytochrome c] + H2O = nitric oxide + 3 Fe(II)-[cytochrome c] + NH4(+) + 2 H(+). It participates in nitrogen metabolism. Component of the hydrazine synthase complex that catalyzes the condensation of nitric oxide (NO) with ammonium to form hydrazine. The gamma subunit catalyzes the first half-reaction, i.e. the three-electron reduction of nitric oxide to hydroxylamine; it may obtain electrons from the triheme cytochrome c kuste2854. Is involved in anaerobic ammonium oxidation (anammox), a biological process in which nitrite is used as the electron acceptor in the conversion of ammonium to dinitrogen gas (N2) and water; this bacterial process has a major role in the Earth's nitrogen cycle and has been estimated to synthesize up to 50% of the dinitrogen gas emitted into our atmosphere from the oceans. This chain is Hydrazine synthase subunit gamma, found in Kuenenia stuttgartiensis.